A 121-amino-acid polypeptide reads, in one-letter code: Large ribosomal subunit protein uL14c (121 aa).

This sequence belongs to the universal ribosomal protein uL14 family. Part of the 50S ribosomal subunit.

The protein resides in the plastid. It localises to the organellar chromatophore. In terms of biological role, binds to 23S rRNA. The protein is Large ribosomal subunit protein uL14c of Paulinella chromatophora.